We begin with the raw amino-acid sequence, 69 residues long: Large ribosomal subunit protein uL29 (69 aa).

This sequence belongs to the universal ribosomal protein uL29 family.

This Methylobacillus flagellatus (strain ATCC 51484 / DSM 6875 / VKM B-1610 / KT) protein is Large ribosomal subunit protein uL29.